Consider the following 277-residue polypeptide: Protein PTST, chloroplastic (277 aa).

Residues 1–44 (MGCVPRIEFGCSSQSLTLSWNLRAWNLCRLNTISHFQKLPYPLV) constitute a chloroplast transit peptide. Residues 95–152 (DTERSKLVKKLSEANQQNRFLKRQLKTQEHEITNIKTELALMELEVQALVKLAEEIAN) adopt a coiled-coil conformation.

As to quaternary structure, interacts with GBSS1.

It is found in the plastid. It localises to the chloroplast stroma. In terms of biological role, involved in targeting GBSS1 to the starch granule. Was originally thought to be a carbohydrate-binding scaffold protein, but it has been shown that it is mainly found as a soluble protein and that interaction with GBSS1 is a pre-requisite for subsequent starch granule binding. Dissociation from starch as a function of pH, Mg(2+) concentration or redox state is not observed. Interacts primarily with amylopectin and is required for amylose synthesis. The polypeptide is Protein PTST, chloroplastic (Arabidopsis thaliana (Mouse-ear cress)).